A 365-amino-acid chain; its full sequence is 2-aminoethylphosphonate--pyruvate transaminase (365 aa).

Lys-194 is subject to N6-(pyridoxal phosphate)lysine.

Belongs to the class-V pyridoxal-phosphate-dependent aminotransferase family. PhnW subfamily. In terms of assembly, homodimer. The cofactor is pyridoxal 5'-phosphate.

The catalysed reaction is (2-aminoethyl)phosphonate + pyruvate = phosphonoacetaldehyde + L-alanine. Its function is as follows. Involved in phosphonate degradation. This is 2-aminoethylphosphonate--pyruvate transaminase from Bacillus cereus (strain G9842).